Consider the following 357-residue polypeptide: Sorbitol dehydrogenase (357 aa).

Ala2 is modified (N-acetylalanine). Residue Cys45 coordinates Zn(2+). Tyr51 is a substrate binding site. Residues His70 and Glu71 each contribute to the Zn(2+) site. Glu156 provides a ligand contact to substrate. Residue Ser169 is modified to Phosphoserine. NAD(+) contacts are provided by residues Val184, Asp204, Arg209, 273–275 (VGM), and 297–299 (VFR). Positions 299 and 300 each coordinate substrate.

The protein belongs to the zinc-containing alcohol dehydrogenase family. As to quaternary structure, homotetramer. It depends on Zn(2+) as a cofactor. As to expression, testis has the highest level of expression, followed by kidney, liver, and lung. Low levels of expression are also observed in lens, brain, and skeletal muscle. Expressed in sperm flagellum and very low expression in the sperm head.

The protein resides in the mitochondrion membrane. Its subcellular location is the cell projection. The protein localises to the cilium. It localises to the flagellum. It catalyses the reaction keto-D-fructose + NADH + H(+) = D-sorbitol + NAD(+). The enzyme catalyses xylitol + NAD(+) = D-xylulose + NADH + H(+). The catalysed reaction is L-iditol + NAD(+) = keto-L-sorbose + NADH + H(+). Its activity is regulated as follows. Inhibited in vitro by p-hydroxymercuribenzoate, EDTA, l,l0-phenanthroline and N-ethylmaleimide. Functionally, polyol dehydrogenase that catalyzes the reversible NAD(+)-dependent oxidation of various sugar alcohols. Is active with D-sorbitol (D-glucitol) leading to the C2-oxidized product D-fructose. Is a key enzyme in the polyol pathway that interconverts glucose and fructose via sorbitol, which constitutes an important alternate route for glucose metabolism. May play a role in sperm motility by using sorbitol as an alternative energy source for sperm motility and protein tyrosine phosphorylation. Has no activity on ethanol. Cannot use NADP(+) as the electron acceptor. This is Sorbitol dehydrogenase (Sord) from Mus musculus (Mouse).